The sequence spans 394 residues: Probable sugar efflux transporter (394 aa).

The next 12 helical transmembrane spans lie at 15–35, 50–70, 79–99, 109–129, 137–157, 168–188, 209–229, 249–269, 272–292, 299–319, 333–353, and 362–382; these read VLMLAIAAFIFNTTEFVPVGL, VGLMLTIYAWVVALMSLPMML, MLLMIIFVMFVASHALSSVAW, IGIALSHAIFWSITASLAIRV, QALSMMATGTALAMVLGLPIG, ITFAVIGAVAFVTMLLLLKLL, PALVALYLLIAITVTAHYTAY, FLLLIFGAAGIVGSVLFSIYG, FPATFLLAAIGLITLSMMCLY, LAVSTLCVIWGIAVMVMGLAV, VAMSLLSGIYNIGIGAGALLG, and MASVGYVGGAIGILSLLWCAW.

The protein belongs to the major facilitator superfamily. SotB (TC 2.A.1.2) family.

It localises to the cell inner membrane. Involved in the efflux of sugars. The physiological role may be the reduction of the intracellular concentration of toxic sugars or sugar metabolites. This Erwinia tasmaniensis (strain DSM 17950 / CFBP 7177 / CIP 109463 / NCPPB 4357 / Et1/99) protein is Probable sugar efflux transporter.